Consider the following 328-residue polypeptide: Tetraacyldisaccharide 4'-kinase (328 aa).

ATP is bound at residue 55–62 (TAGGNGKT).

The protein belongs to the LpxK family.

The catalysed reaction is a lipid A disaccharide + ATP = a lipid IVA + ADP + H(+). Its pathway is glycolipid biosynthesis; lipid IV(A) biosynthesis; lipid IV(A) from (3R)-3-hydroxytetradecanoyl-[acyl-carrier-protein] and UDP-N-acetyl-alpha-D-glucosamine: step 6/6. Its function is as follows. Transfers the gamma-phosphate of ATP to the 4'-position of a tetraacyldisaccharide 1-phosphate intermediate (termed DS-1-P) to form tetraacyldisaccharide 1,4'-bis-phosphate (lipid IVA). The chain is Tetraacyldisaccharide 4'-kinase from Escherichia coli (strain K12 / MC4100 / BW2952).